The primary structure comprises 244 residues: 7-cyano-7-deazaguanine synthase (244 aa).

14–24 (FSGGQDSATCL) lines the ATP pocket. Positions 202, 217, 220, and 223 each coordinate Zn(2+).

The protein belongs to the QueC family. Requires Zn(2+) as cofactor.

The catalysed reaction is 7-carboxy-7-deazaguanine + NH4(+) + ATP = 7-cyano-7-deazaguanine + ADP + phosphate + H2O + H(+). It participates in purine metabolism; 7-cyano-7-deazaguanine biosynthesis. Functionally, catalyzes the ATP-dependent conversion of 7-carboxy-7-deazaguanine (CDG) to 7-cyano-7-deazaguanine (preQ(0)). The chain is 7-cyano-7-deazaguanine synthase from Paraburkholderia phytofirmans (strain DSM 17436 / LMG 22146 / PsJN) (Burkholderia phytofirmans).